A 163-amino-acid polypeptide reads, in one-letter code: Late embryogenesis abundant protein Dc3 (163 aa).

2 disordered regions span residues 1–117 and 139–163; these read MASH…GGLM and FGMAGADEEEKTTTTRVTRSSARTE. Basic and acidic residues-rich tracts occupy residues 28–56, 67–84, and 91–113; these read TMKDKAQAAKDKASEMAGSARDRTVESKD, GAVKDKTCETAQAAKEKT, and TKEKASEMGESAKETAVAGKEKT. 6 repeat units span residues 32-42, 43-53, 65-75, 76-86, 87-97, and 103-115. A 6 X 11 AA approximate repeats region spans residues 32 to 115; the sequence is KAQAAKDKAS…AVAGKEKTGG (84 aa). Residues 152-163 are compositionally biased toward low complexity; it reads TTRVTRSSARTE.

This sequence belongs to the LEA type 4 family.

This is Late embryogenesis abundant protein Dc3 from Daucus carota (Wild carrot).